We begin with the raw amino-acid sequence, 510 residues long: uncharacterized protein (510 aa).

A run of 12 helical transmembrane segments spans residues 17–37 (LKLG…LVVL), 56–76 (LIIH…ASVW), 111–131 (VLYI…ISPL), 148–168 (IVFI…AINI), 180–200 (LVNV…VCFG), 223–243 (LLFW…LIFI), 261–281 (FYLF…FGHI), 300–320 (YLGG…LVLM), 355–375 (IIKT…LIAI), 382–402 (LVIP…CMGY), 434–454 (AIYL…FSGI), and 472–492 (LLMG…LMFV).

This sequence to A.aeolicus AQ_155.

The protein localises to the cell membrane. This is an uncharacterized protein from Rickettsia prowazekii (strain Madrid E).